Reading from the N-terminus, the 522-residue chain is Anti-sigma-I factor RsgI4 (522 aa).

Residues 1–51 are Cytoplasmic-facing; it reads MNLGVVIKIKRKKAIIVTETGEFKAVNARNGMFLGQKILFDQQDVIENNRN. The RsgI N-terminal anti-sigma domain occupies 2 to 49; that stretch reads NLGVVIKIKRKKAIIVTETGEFKAVNARNGMFLGQKILFDQQDVIENN. Residues 52 to 72 form a helical membrane-spanning segment; sequence GIGLAYSAAIAGMVAVFVFMF. Topologically, residues 73–522 are extracellular; that stretch reads TYFGLHNFNG…SGILKWGREP (450 aa). Low complexity predominate over residues 311–361; sequence SAKTPERATTVPVNTPVKPTDAPTKSPATATATATRAPVKATATPAKTLKP. The interval 311–371 is disordered; it reads SAKTPERATT…SDTPVKTPDG (61 aa). The CBM3 domain maps to 371–522; the sequence is GEQSVKVRFY…SGILKWGREP (152 aa).

Interacts (via RsgI N-terminal anti-sigma domain) with SigI4.

It localises to the cell membrane. Its function is as follows. Anti-sigma factor for SigI4. Negatively regulates SigI4 activity through direct interaction. Binding of the polysaccharide substrate to the extracellular C-terminal sensing domain of RsgI4 may induce a conformational change in its N-terminal cytoplasmic region, leading to the release and activation of SigI4. In Acetivibrio thermocellus (strain ATCC 27405 / DSM 1237 / JCM 9322 / NBRC 103400 / NCIMB 10682 / NRRL B-4536 / VPI 7372) (Clostridium thermocellum), this protein is Anti-sigma-I factor RsgI4.